We begin with the raw amino-acid sequence, 158 residues long: Urease accessory protein UreE (158 aa).

Belongs to the UreE family.

It localises to the cytoplasm. In terms of biological role, involved in urease metallocenter assembly. Binds nickel. Probably functions as a nickel donor during metallocenter assembly. The chain is Urease accessory protein UreE from Klebsiella pneumoniae subsp. pneumoniae (strain ATCC 700721 / MGH 78578).